Reading from the N-terminus, the 160-residue chain is M-phase phosphoprotein 6 (160 aa).

Glycyl lysine isopeptide (Lys-Gly) (interchain with G-Cter in SUMO2) cross-links involve residues K37 and K86. Residue S110 is modified to Phosphoserine. The Nuclear localization signal signature appears at 116–133 (RRYETLVGTIGKKFARKR). K127 participates in a covalent cross-link: Glycyl lysine isopeptide (Lys-Gly) (interchain with G-Cter in SUMO2). At T147 the chain carries Phosphothreonine. Residues K150 and K153 each participate in a glycyl lysine isopeptide (Lys-Gly) (interchain with G-Cter in SUMO2) cross-link.

It belongs to the MPP6 family. Associates with the RNA exosome complex, mediated by EXOSC3. Interacts with ARHGAP18. Interacts with exosome cofactors EXOSC10 and MTREX. Phosphorylated in M (mitotic) phase.

Its subcellular location is the nucleus. It is found in the nucleolus. It localises to the cytoplasm. Its function is as follows. RNA-binding protein that associates with the RNA exosome complex. Involved in the 3'-processing of the 7S pre-RNA to the mature 5.8S rRNA and play a role in recruiting the RNA exosome complex to pre-rRNA; this function may include C1D. In Homo sapiens (Human), this protein is M-phase phosphoprotein 6.